We begin with the raw amino-acid sequence, 259 residues long: NAD(P)H-quinone oxidoreductase subunit K 2 (259 aa).

Residues Cys-52, Cys-53, Cys-117, and Cys-148 each coordinate [4Fe-4S] cluster.

The protein belongs to the complex I 20 kDa subunit family. NDH-1 can be composed of about 15 different subunits; different subcomplexes with different compositions have been identified which probably have different functions. The cofactor is [4Fe-4S] cluster.

The protein resides in the cellular thylakoid membrane. The enzyme catalyses a plastoquinone + NADH + (n+1) H(+)(in) = a plastoquinol + NAD(+) + n H(+)(out). The catalysed reaction is a plastoquinone + NADPH + (n+1) H(+)(in) = a plastoquinol + NADP(+) + n H(+)(out). Functionally, NDH-1 shuttles electrons from an unknown electron donor, via FMN and iron-sulfur (Fe-S) centers, to quinones in the respiratory and/or the photosynthetic chain. The immediate electron acceptor for the enzyme in this species is believed to be plastoquinone. Couples the redox reaction to proton translocation, and thus conserves the redox energy in a proton gradient. Cyanobacterial NDH-1 also plays a role in inorganic carbon-concentration. The protein is NAD(P)H-quinone oxidoreductase subunit K 2 (ndhK2) of Cyanothece sp. (strain PCC 7425 / ATCC 29141).